A 198-amino-acid chain; its full sequence is Holliday junction branch migration complex subunit RuvA (198 aa).

The interval 1–63 is domain I; the sequence is MYDYIKGQLT…EDAHLLFGFH (63 aa). The tract at residues 64–142 is domain II; the sequence is TEDEKDVFLK…EAPQETGHTK (79 aa). The interval 143 to 147 is flexible linker; it reads ARSNK. Positions 148–198 are domain III; that stretch reads AGNTQLDEAIEALLALGYKAKELKKIRAFFEGTSETAEQYIKSALKLLMKG.

It belongs to the RuvA family. As to quaternary structure, homotetramer. Forms an RuvA(8)-RuvB(12)-Holliday junction (HJ) complex. HJ DNA is sandwiched between 2 RuvA tetramers; dsDNA enters through RuvA and exits via RuvB. An RuvB hexamer assembles on each DNA strand where it exits the tetramer. Each RuvB hexamer is contacted by two RuvA subunits (via domain III) on 2 adjacent RuvB subunits; this complex drives branch migration. In the full resolvosome a probable DNA-RuvA(4)-RuvB(12)-RuvC(2) complex forms which resolves the HJ.

The protein localises to the cytoplasm. The RuvA-RuvB-RuvC complex processes Holliday junction (HJ) DNA during genetic recombination and DNA repair, while the RuvA-RuvB complex plays an important role in the rescue of blocked DNA replication forks via replication fork reversal (RFR). RuvA specifically binds to HJ cruciform DNA, conferring on it an open structure. The RuvB hexamer acts as an ATP-dependent pump, pulling dsDNA into and through the RuvAB complex. HJ branch migration allows RuvC to scan DNA until it finds its consensus sequence, where it cleaves and resolves the cruciform DNA. This chain is Holliday junction branch migration complex subunit RuvA, found in Streptococcus pyogenes serotype M1.